The sequence spans 283 residues: MRTQWPSPAKLNLFLYITGQRADGYHTLQTLFQFLDYGDTISIELRDDGDIRLLTPVEGVEHEDNLIVRAARLLMKTAADSGRLPTGSGANISIDKRLPMGGGLGGGSSNAATVLVALNHLWQCGLSMDELAEMGLTLGADVPVFVRGHAAFAEGVGEILTPVDPPEKWYLVAHPGVSIPTPVIFKDPELPRNTPKRSIETLLKCEFSNDCEVIARKRFREVDAVLSWLLEYAPSRLTGTGACVFAEFDTESEARQVLEQAPEWLNGFVAKGVNLSPLHRAML.

Residue Lys-10 is part of the active site. 99-109 (PMGGGLGGGSS) is a binding site for ATP. Asp-141 is an active-site residue.

This sequence belongs to the GHMP kinase family. IspE subfamily. Homodimer.

It carries out the reaction 4-CDP-2-C-methyl-D-erythritol + ATP = 4-CDP-2-C-methyl-D-erythritol 2-phosphate + ADP + H(+). It functions in the pathway isoprenoid biosynthesis; isopentenyl diphosphate biosynthesis via DXP pathway; isopentenyl diphosphate from 1-deoxy-D-xylulose 5-phosphate: step 3/6. Its function is as follows. Catalyzes the phosphorylation of the position 2 hydroxy group of 4-diphosphocytidyl-2C-methyl-D-erythritol. The sequence is that of 4-diphosphocytidyl-2-C-methyl-D-erythritol kinase from Shigella boydii serotype 18 (strain CDC 3083-94 / BS512).